The chain runs to 548 residues: Probable malate:quinone oxidoreductase (548 aa).

The segment at 521–548 is disordered; it reads DKPQAADSTPKPQLKPQPVQKEVADIAL. Residues 530-541 show a composition bias toward low complexity; it reads PKPQLKPQPVQK.

The protein belongs to the MQO family. Requires FAD as cofactor.

It carries out the reaction (S)-malate + a quinone = a quinol + oxaloacetate. Its pathway is carbohydrate metabolism; tricarboxylic acid cycle; oxaloacetate from (S)-malate (quinone route): step 1/1. This chain is Probable malate:quinone oxidoreductase, found in Escherichia coli O139:H28 (strain E24377A / ETEC).